The following is a 296-amino-acid chain: D-alanine--D-alanine ligase (296 aa).

Residues 103-293 (KEILMHYRMP…FDSFVKRIIE (191 aa)) form the ATP-grasp domain. 129–180 (ISFPVAVKPSSGGSSIATFKVKSIQELKHAYEEASKYGEVMIEQWVTGKEIT) provides a ligand contact to ATP. Residues Asp247, Glu260, and Asn262 each contribute to the Mg(2+) site.

This sequence belongs to the D-alanine--D-alanine ligase family. The cofactor is Mg(2+). It depends on Mn(2+) as a cofactor.

It localises to the cytoplasm. It catalyses the reaction 2 D-alanine + ATP = D-alanyl-D-alanine + ADP + phosphate + H(+). Its pathway is cell wall biogenesis; peptidoglycan biosynthesis. Its function is as follows. Cell wall formation. This is D-alanine--D-alanine ligase from Francisella tularensis subsp. tularensis (strain WY96-3418).